Reading from the N-terminus, the 517-residue chain is Ladinin-1 (517 aa).

The disordered stretch occupies residues 1 to 401; sequence MAVSRKDWSA…SASMKLPDNT (401 aa). Ser38 bears the Phosphoserine mark. Residues 48–58 are compositionally biased toward polar residues; the sequence is LSQNGDRQASA. 4 positions are modified to phosphoserine: Ser64, Ser78, Ser121, and Ser123. Polar residues predominate over residues 120 to 131; that stretch reads NSLSPVQATQKP. Basic and acidic residues-rich tracts occupy residues 134–151 and 161–174; these read SKKELEIPPRRRLSREQR and LVGREPEERKKGVP. 8 SEK repeats span residues 203–205, 209–211, 215–217, 221–223, 227–229, 239–241, 257–259, and 269–271; these read SEK. The tract at residues 203–271 is 8 X SEK repeats; that stretch reads SEKVLASEKT…IFEKALASEK (69 aa). Residues 219–233 are compositionally biased toward basic and acidic residues; sequence AVSEKRNSSEKKSVL. Residues Ser347, Ser356, and Ser394 each carry the phosphoserine modification. A compositionally biased stretch (polar residues) spans 355-373; that stretch reads SSPTQRTYSSSLKRSSPRT. An Omega-N-methylarginine modification is found at Arg424. Positions 481-517 are disordered; the sequence is RTQESGDQDPQEAQKASSATERTQWGQKSDSSLDAEV. Ser485 bears the Phosphoserine mark. The span at 494-517 shows a compositional bias: polar residues; that stretch reads QKASSATERTQWGQKSDSSLDAEV.

The protein resides in the secreted. It localises to the extracellular space. The protein localises to the extracellular matrix. Its subcellular location is the basement membrane. Anchoring filament protein which is a component of the basement membrane zone. The sequence is that of Ladinin-1 (LAD1) from Homo sapiens (Human).